The primary structure comprises 228 residues: Cytidylate kinase (228 aa).

Position 12–20 (12–20 (GPSGSGKGT)) interacts with ATP.

Belongs to the cytidylate kinase family. Type 1 subfamily.

It localises to the cytoplasm. It carries out the reaction CMP + ATP = CDP + ADP. The catalysed reaction is dCMP + ATP = dCDP + ADP. The chain is Cytidylate kinase from Pseudomonas putida (strain ATCC 47054 / DSM 6125 / CFBP 8728 / NCIMB 11950 / KT2440).